The sequence spans 443 residues: 26S proteasome regulatory subunit 4 homolog A (443 aa).

2 disordered regions span residues 1–55 (MGQG…LPTV) and 87–108 (RLKP…LRGT). 2 stretches are compositionally biased toward basic and acidic residues: residues 12–28 (QGDR…KKFE) and 87–106 (RLKP…DDLR). Residue 229–236 (GEPGTGKT) participates in ATP binding. Glycyl lysine isopeptide (Lys-Gly) (interchain with G-Cter in ubiquitin) cross-links involve residues lysine 296 and lysine 433.

This sequence belongs to the AAA ATPase family. In terms of assembly, component of the 19S regulatory particle (RP/PA700) base subcomplex of the 26S proteasome. The 26S proteasome is composed of a core protease (CP), known as the 20S proteasome, capped at one or both ends by the 19S regulatory particle (RP/PA700). The RP/PA700 complex is composed of at least 17 different subunits in two subcomplexes, the base and the lid, which form the portions proximal and distal to the 20S proteolytic core, respectively. Required for innate immunity. Interacts with UNI. As to expression, preferentially expressed in the root and shoot apical meristem.

The protein localises to the cytoplasm. Its subcellular location is the P-body. It is found in the nucleus. The 26S protease is involved in the ATP-dependent degradation of ubiquitinated proteins. The regulatory (or ATPase) complex confers ATP dependency and substrate specificity to the 26S complex. Interacts with transit peptides of proteins targeted to the chloroplast, and may be involved in the degradation of unimported plastid protein precursors. Is required for the maintenance of postembryonic root and shoot meristems. Has a specific role in the regulation of organs size. Acts redundantly with RPT2B in the regulation of gametogenesis. With RPT2B plays a critical role in 26S proteasome assembly. Acts as an upstream signaling component for inducing both defense and morphological phenotypes in the constitutive active uni-1D mutant. Acts as a negative regulator of endoreduplication in trichome cells. May function after the completion of the third endoreduplication step (8C to 16C) mediated by RHL1. Acts as a negative regulator of transcriptional gene silencing (TGS) at specific endogenous genes through DNA methylation. Promotes post-transcriptional gene silencing (PTGS) by limiting the degradation of transgene aberrant RNAs by the RNA quality control (RQC) machinery, thus favoring their entry into cytoplasmic siRNA bodies where they can trigger PTGS. Involved in tolerance to zinc deficiency, possibly through alleviation of oxidative stresses or processing of poly-ubiquitinated proteins. Required for resistance to the fungal pathogen Golovinomyces cichoracearum. This is 26S proteasome regulatory subunit 4 homolog A from Arabidopsis thaliana (Mouse-ear cress).